The sequence spans 459 residues: Argininosuccinate lyase (459 aa).

A disordered region spans residues 440–459 (DEKKLEELRQNENRDNVYNP).

The protein belongs to the lyase 1 family. Argininosuccinate lyase subfamily.

Its subcellular location is the cytoplasm. The enzyme catalyses 2-(N(omega)-L-arginino)succinate = fumarate + L-arginine. The protein operates within amino-acid biosynthesis; L-arginine biosynthesis; L-arginine from L-ornithine and carbamoyl phosphate: step 3/3. In Pyrococcus furiosus (strain ATCC 43587 / DSM 3638 / JCM 8422 / Vc1), this protein is Argininosuccinate lyase.